The primary structure comprises 95 residues: Ribonuclease kappa-B (95 aa).

A run of 2 helical transmembrane segments spans residues 12 to 32 and 68 to 88; these read GLIISVWGIIQLVLMGLFFYI and CWIAACIYVLTLLLSAQQFYV.

It belongs to the RNase K family.

The protein resides in the membrane. Inhibited by Zn(2+) and Hg(2+), while it is unaffected by Ca(2+). Its function is as follows. Endoribonuclease which displays activity against poly(C) and poly(U) synthetic substrates, as well as rRNA. The sequence is that of Ribonuclease kappa-B from Ceratitis capitata (Mediterranean fruit fly).